A 382-amino-acid chain; its full sequence is UDP-4-amino-4-deoxy-L-arabinose--oxoglutarate aminotransferase (382 aa).

An N6-(pyridoxal phosphate)lysine modification is found at Lys183.

The protein belongs to the DegT/DnrJ/EryC1 family. ArnB subfamily. In terms of assembly, homodimer. Pyridoxal 5'-phosphate is required as a cofactor.

The catalysed reaction is UDP-4-amino-4-deoxy-beta-L-arabinose + 2-oxoglutarate = UDP-beta-L-threo-pentopyranos-4-ulose + L-glutamate. Its pathway is nucleotide-sugar biosynthesis; UDP-4-deoxy-4-formamido-beta-L-arabinose biosynthesis; UDP-4-deoxy-4-formamido-beta-L-arabinose from UDP-alpha-D-glucuronate: step 2/3. It functions in the pathway bacterial outer membrane biogenesis; lipopolysaccharide biosynthesis. Its function is as follows. Catalyzes the conversion of UDP-4-keto-arabinose (UDP-Ara4O) to UDP-4-amino-4-deoxy-L-arabinose (UDP-L-Ara4N). The modified arabinose is attached to lipid A and is required for resistance to polymyxin and cationic antimicrobial peptides. This is UDP-4-amino-4-deoxy-L-arabinose--oxoglutarate aminotransferase from Pseudomonas aeruginosa (strain ATCC 15692 / DSM 22644 / CIP 104116 / JCM 14847 / LMG 12228 / 1C / PRS 101 / PAO1).